A 441-amino-acid chain; its full sequence is Xylose isomerase (441 aa).

Active-site residues include His105 and Asp108. Mg(2+)-binding residues include Glu236, Glu272, His275, Asp300, Asp311, Asp313, and Asp343.

Belongs to the xylose isomerase family. As to quaternary structure, homotetramer. It depends on Mg(2+) as a cofactor.

The protein localises to the cytoplasm. It carries out the reaction alpha-D-xylose = alpha-D-xylulofuranose. This Mesorhizobium japonicum (strain LMG 29417 / CECT 9101 / MAFF 303099) (Mesorhizobium loti (strain MAFF 303099)) protein is Xylose isomerase.